The following is a 259-amino-acid chain: MDITKMPIGFFDSGVGGLSVLREAIKVLPNEDFIYFGDSKNAPYGTKTVDEVKKLTFNAVEFLLGHNVKAVVIACNTATSAAIEDLRNSYKDIPIIGIEPALKPAVELNKKGKIVVMATPMTLAEKKFNDLMAKYKGRSEMVSLPCPGLVEYVEKGIVKGQELNNYLQKKLSIIDKKEISSVVLGCTHYPFIKEELSKILGEDVVIIDGSLGTSIQLKRKLIKNKSLNLQDKKGTVKIFNSLDNNEEIIKISKKLLGII.

Residues 12–13 (DS) and 44–45 (YG) contribute to the substrate site. Catalysis depends on C75, which acts as the Proton donor/acceptor. Residue 76 to 77 (NT) coordinates substrate. C186 functions as the Proton donor/acceptor in the catalytic mechanism. Substrate is bound at residue 187–188 (TH).

This sequence belongs to the aspartate/glutamate racemases family.

It catalyses the reaction L-glutamate = D-glutamate. It participates in cell wall biogenesis; peptidoglycan biosynthesis. In terms of biological role, provides the (R)-glutamate required for cell wall biosynthesis. The protein is Glutamate racemase of Clostridium novyi (strain NT).